The chain runs to 445 residues: RGLPSRSVFLRGCQASLSTAQERLGHPGVPTREGVRVATRSPRPYHEIPSPGDNGWLNLYHLAEEKGTHRVHYRHVQNFQKYGPIYRENLGNVESVYIMDPEDVALLFNSEGPQPERFLIPPWVAYHEYYRRPVGVLLKKAQGWKRDRVALNQEVMAPDAIKNFVPLLEAVSQAFVRMLHGRVQQGVFSGDISDDLFRFAFESMTNIMFGERLGMLEETVDPEAHEFIDAVYQMFHTSVPMLSLPPSLFRLFRTRTWRDHVAAWDVIFTNADKYTQSFYWDLRQKQDLGGSYRGILYSLLGTSKLSFEDIKANVTEMLAGSVDTTSMTLQWHLYEMGAALGMQEMLRAEVLAARRQAQGDMTAMLQSVPLLKASIKETLRLHPISVTLQRYLVNDLVLQDYMIPAKTLVQVANYGMGREPSFFANPEKFDPPRWLDKDKNATHFR.

Residues 1 to 36 (RGLPSRSVFLRGCQASLSTAQERLGHPGVPTREGVR) constitute a mitochondrion transit peptide.

Belongs to the cytochrome P450 family. In terms of assembly, interacts with FDX1/adrenodoxin. It depends on heme as a cofactor.

It is found in the mitochondrion inner membrane. It catalyses the reaction 6 reduced [adrenodoxin] + cholesterol + 3 O2 + 6 H(+) = 4-methylpentanal + pregnenolone + 6 oxidized [adrenodoxin] + 4 H2O. It carries out the reaction 2 reduced [adrenodoxin] + cholesterol + O2 + 2 H(+) = (22R)-hydroxycholesterol + 2 oxidized [adrenodoxin] + H2O. The catalysed reaction is (22R)-hydroxycholesterol + 2 reduced [adrenodoxin] + O2 + 2 H(+) = (20R,22R)-20,22-dihydroxycholesterol + 2 oxidized [adrenodoxin] + H2O. The enzyme catalyses (20R,22R)-20,22-dihydroxycholesterol + 2 reduced [adrenodoxin] + O2 + 2 H(+) = 4-methylpentanal + pregnenolone + 2 oxidized [adrenodoxin] + 2 H2O. It participates in lipid metabolism; C21-steroid hormone metabolism. It functions in the pathway steroid metabolism; cholesterol metabolism. Functionally, a cytochrome P450 monooxygenase that catalyzes the side-chain hydroxylation and cleavage of cholesterol to pregnenolone, the precursor of most steroid hormones. Catalyzes three sequential oxidation reactions of cholesterol, namely the hydroxylation at C22 followed with the hydroxylation at C20 to yield 20R,22R-hydroxycholesterol that is further cleaved between C20 and C22 to yield the C21-steroid pregnenolone and 4-methylpentanal. Mechanistically, uses molecular oxygen inserting one oxygen atom into a substrate and reducing the second into a water molecule. Two electrons are provided by NADPH via a two-protein mitochondrial transfer system comprising flavoprotein FDXR (adrenodoxin/ferredoxin reductase) and nonheme iron-sulfur protein FDX1 or FDX2 (adrenodoxin/ferredoxin). The sequence is that of Cholesterol side-chain cleavage enzyme, mitochondrial (CYP11A1) from Oryctolagus cuniculus (Rabbit).